Consider the following 307-residue polypeptide: Aspartate carbamoyltransferase catalytic subunit (307 aa).

Carbamoyl phosphate contacts are provided by Arg59 and Thr60. Lys87 is an L-aspartate binding site. 3 residues coordinate carbamoyl phosphate: Arg109, His137, and Gln140. The L-aspartate site is built by Arg173 and Arg223. Carbamoyl phosphate-binding residues include Gly266 and Pro267.

This sequence belongs to the aspartate/ornithine carbamoyltransferase superfamily. ATCase family. Heterododecamer (2C3:3R2) of six catalytic PyrB chains organized as two trimers (C3), and six regulatory PyrI chains organized as three dimers (R2).

It catalyses the reaction carbamoyl phosphate + L-aspartate = N-carbamoyl-L-aspartate + phosphate + H(+). The protein operates within pyrimidine metabolism; UMP biosynthesis via de novo pathway; (S)-dihydroorotate from bicarbonate: step 2/3. Catalyzes the condensation of carbamoyl phosphate and aspartate to form carbamoyl aspartate and inorganic phosphate, the committed step in the de novo pyrimidine nucleotide biosynthesis pathway. This is Aspartate carbamoyltransferase catalytic subunit from Helicobacter pylori (strain G27).